The sequence spans 528 residues: UDP-glucuronosyltransferase 2B10 (528 aa).

Residues 1–23 (MALKWTTVLLIQLSFYFSSGSCG) form the signal peptide. Asn66 carries N-linked (GlcNAc...) asparagine glycosylation. Residue Lys134 is modified to N6-succinyllysine. 2 N-linked (GlcNAc...) asparagine glycosylation sites follow: Asn314 and Asn481. A helical transmembrane segment spans residues 492-512 (VIGFLLACVATVLFIITKCCL).

It belongs to the UDP-glycosyltransferase family.

The protein resides in the microsome membrane. It is found in the endoplasmic reticulum membrane. The catalysed reaction is glucuronate acceptor + UDP-alpha-D-glucuronate = acceptor beta-D-glucuronoside + UDP + H(+). In terms of biological role, UDPGT is of major importance in the conjugation and subsequent elimination of potentially toxic xenobiotics and endogenous compounds. This Homo sapiens (Human) protein is UDP-glucuronosyltransferase 2B10 (UGT2B10).